A 355-amino-acid polypeptide reads, in one-letter code: UPF0324 membrane protein PA5383 (355 aa).

The next 10 helical transmembrane spans lie at 20–37, 44–66, 71–93, 100–122, 137–159, 166–188, 233–255, 275–297, 307–324, and 331–353; these read IPGLLLSAALAGVAILLG, HNGISALTLAIVLGILVGNTLYP, GSAAGVGFSKQILLRAGIILYGL, IAGVGLHGVLLDALMLASTFGLA, TLLIGAGSSICGAAAVMATEPVV, VAVAVSTVVVFGTLGIFLYPALF, AVIAKMVRVMMLAPFLILLSAWL, WFAVGFVLVAGLNSLVSLPPALV, LLAMAMAGLGLGTHLSAI, and PLLLAALLFAWLVLGGGFLTRLA.

Belongs to the UPF0324 family.

The protein resides in the cell membrane. In Pseudomonas aeruginosa (strain ATCC 15692 / DSM 22644 / CIP 104116 / JCM 14847 / LMG 12228 / 1C / PRS 101 / PAO1), this protein is UPF0324 membrane protein PA5383.